A 66-amino-acid polypeptide reads, in one-letter code: Large ribosomal subunit protein bL33c (66 aa).

This sequence belongs to the bacterial ribosomal protein bL33 family.

The protein resides in the plastid. Its subcellular location is the chloroplast. In Glycine max (Soybean), this protein is Large ribosomal subunit protein bL33c.